The primary structure comprises 1396 residues: DNA-directed RNA polymerase subunit beta' (1396 aa).

The Zn(2+) site is built by C72, C74, C87, and C90. 3 residues coordinate Mg(2+): D463, D465, and D467. The Zn(2+) site is built by C814, C889, C896, and C899.

Belongs to the RNA polymerase beta' chain family. In terms of assembly, the RNAP catalytic core consists of 2 alpha, 1 beta, 1 beta' and 1 omega subunit. When a sigma factor is associated with the core the holoenzyme is formed, which can initiate transcription. Mg(2+) is required as a cofactor. The cofactor is Zn(2+).

It carries out the reaction RNA(n) + a ribonucleoside 5'-triphosphate = RNA(n+1) + diphosphate. In terms of biological role, DNA-dependent RNA polymerase catalyzes the transcription of DNA into RNA using the four ribonucleoside triphosphates as substrates. This Chlamydia muridarum (strain MoPn / Nigg) protein is DNA-directed RNA polymerase subunit beta'.